A 7388-amino-acid chain; its full sequence is Microtubule-actin cross-linking factor 1, isoforms 1/2/3/4/5 (7388 aa).

The disordered stretch occupies residues 1-47 (MSSSDEETLSERSCRSERSCRSERSYRSERSGSLSPCPPGDTLPWNL). Positions 1–295 (MSSSDEETLS…VITYVSSIYD (295 aa)) are actin-binding. Ser-4 is subject to Phosphoserine. Residues 9–30 (LSERSCRSERSCRSERSYRSER) show a composition bias toward basic and acidic residues. Phosphoserine is present on residues Ser-35 and Ser-57. Calponin-homology (CH) domains lie at 78–181 (RVQK…LHFQ) and 194–298 (MSAK…DAFP). LRR repeat units lie at residues 148–171 (QRQV…LTLG) and 240–264 (LVDM…VAER). Phosphoserine is present on Ser-280. 2 LRR repeats span residues 377-399 (LYKL…YHPN) and 441-464 (LNCE…LESG). Ser-814 carries the post-translational modification Phosphoserine. One can recognise an SH3 domain in the interval 868–925 (KNTISVKAVCDYRQIEITICKNDECVLEDNSQRTKWKVISPTGNEAMVPSVCFLIPPP). An LRR 5 repeat occupies 1050-1073 (ISELKNIRLRLEEYEQRVVKRIQS). A Phosphoserine modification is found at Ser-1122. 3 LRR repeats span residues 1128-1154 (VPTL…VYLN), 1187-1210 (LADL…VKDK), and 1257-1282 (HRVI…DYRA). Ser-1367 and Ser-1376 each carry phosphoserine. 5 Plectin repeats span residues 1577–1621 (LVLL…RELQ), 1654–1696 (LKIL…VLES), 1769–1809 (RLLE…CAIL), 1811–1848 (RQLQ…VILE), and 1855–1886 (GLLW…KILS). Residues Ser-2006 and Ser-2051 each carry the phosphoserine modification. Residues 2051 to 2085 (SQNKEYPDREDCTTEKGKKTTVETEDSSVENPEQD) form a disordered region. Basic and acidic residues predominate over residues 2055–2072 (EYPDREDCTTEKGKKTTV). Ser-2077 bears the Phosphoserine mark. Plectin repeat units lie at residues 2290 to 2332 (LNVL…KLME), 2367 to 2410 (NVLM…LERQ), 2411 to 2437 (VVTG…GLVD), 2501 to 2543 (RLLT…LKRV), 2581 to 2612 (EVQA…LTNE), and 2686 to 2730 (LKVL…ASHQ). Disordered regions lie at residues 3013-3034 (EHDS…GKEA) and 3104-3174 (SEPF…NECK). A compositionally biased stretch (basic and acidic residues) spans 3115–3124 (EGLHYQESDG). At Ser-3122 the chain carries Phosphoserine. The span at 3129–3158 (TGPSQISKTDKSFQGTTRQETNYQDSWVTS) shows a compositional bias: polar residues. LRR repeat units lie at residues 3239-3262 (LTGE…SIED) and 3264-3283 (VTQR…LFKG). Over residues 3321-3332 (EKTPQEKLRESP) the composition is skewed to basic and acidic residues. The segment at 3321 to 3350 (EKTPQEKLRESPGSEQTPFMTAPEGKGNGG) is disordered. Ser-3331 is modified (phosphoserine). LRR repeat units lie at residues 3646–3669 (QQDL…IQNR) and 3696–3720 (LTAL…TRVA). Spectrin repeat units lie at residues 3883-3957 (ELQK…NSFK) and 4000-4108 (QYHQ…SLLQ). The residue at position 3927 (Ser-3927) is a Phosphoserine. One copy of the LRR 13 repeat lies at 3936 to 3958 (KGDLRFVTISGQKVLDMENSFKE). LRR repeat units lie at residues 4125 to 4150 (LQSI…VIQE) and 4261 to 4287 (IQEL…ELSS). One copy of the Spectrin 3 repeat lies at 4466 to 4574 (RMEEVHKEAN…TVARQRQLEE (109 aa)). Phosphoserine occurs at positions 4495, 4496, and 4521. 3 LRR repeats span residues 4511 to 4534 (KAFL…LAGL), 4601 to 4624 (GVLG…QFML), and 4769 to 4792 (KKRL…RINR). Spectrin repeat units follow at residues 4800–4904 (TQQF…SRLK) and 4909–5012 (KAQK…SLEE). Residues Ser-4836 and Ser-4962 each carry the phosphoserine modification. LRR repeat units follow at residues 5051–5076 (NKNL…YLRN), 5172–5194 (NKIH…MLEE), and 5281–5304 (KEQV…LIQS). 3 Spectrin repeats span residues 5236 to 5341 (EDFY…QLQE), 5348 to 5450 (KFQD…QLED), and 5455 to 5557 (AKQF…LRTL). Thr-5435 is subject to Phosphothreonine. The interval 5583 to 5603 (EELATSGGQSPTGEQIPQFQQ) is disordered. Residues 5588 to 5603 (SGGQSPTGEQIPQFQQ) are compositionally biased toward polar residues. LRR repeat units lie at residues 5695 to 5719 (MALG…AFSI) and 5804 to 5828 (AQLP…QLRE). Spectrin repeat units lie at residues 5783–5885 (NQFW…ALDE), 6005–6110 (LAEK…KLED), 6115–6219 (AVQY…HKLE), 6225–6328 (LGQF…QQLQ), 6333–6439 (QAQG…KLEE), 6443–6547 (LATE…RSLD), 6552–6658 (RAKQ…KLEE), 6665–6766 (QFMD…RLEQ), and 6771–6874 (AEVF…QRLE). Phosphoserine occurs at positions 5808 and 6032. An N6-acetyllysine modification is found at Lys-6210. The LRR 24 repeat unit spans residues 6496-6519 (RDQIIELDQTGNQLKFLSQKQDVV). A disordered region spans residues 6951-6981 (PTHAPFIEKSRSGGRKSLSQPTPPPMPILSQ). Ser-6967 is modified (phosphoserine). EF-hand domains follow at residues 7041-7076 (HKKS…SKFP) and 7077-7112 (TTKL…NKDA). The Ca(2+) site is built by Asp-7054, Asp-7056, Asp-7058, Lys-7060, Glu-7065, Asp-7090, Asp-7092, Asp-7094, Tyr-7096, and Glu-7101. Residues 7117–7189 (TDADKIEDEV…EFLVKNDPCR (73 aa)) form the GAR domain. The tract at residues 7117 to 7388 (TDADKIEDEV…ASPRTPGPKR (272 aa)) is C-terminal tail. The segment at 7205-7388 (PEGASQGMTP…ASPRTPGPKR (184 aa)) is disordered. The segment covering 7225–7259 (SSRAASPTRSSSSASQSNHSCTSMPSSPATPASGT) has biased composition (low complexity). Thr-7254 is modified (phosphothreonine). Residues 7275–7299 (TFHSSRTSLAGDTSNSSSPASTGAK) are compositionally biased toward polar residues. Residues Ser-7279 and Ser-7292 each carry the phosphoserine modification. Residues 7310-7324 (SRPGSRAGSRAGSRA) show a composition bias toward low complexity. The 4 X 4 AA tandem repeats of [GS]-S-R-[AR] stretch occupies residues 7313–7328 (GSRAGSRAGSRASSRR). Residues Ser-7330 and Ser-7333 each carry the phosphoserine modification. The segment covering 7339–7361 (ETQSACSDTSESSAAGGQGNSRR) has biased composition (polar residues).

This sequence belongs to the plakin or cytolinker family. Isoform 2: Interacts with MAPRE1, CLASP1, CLASP2, AXIN1 and LRP6. Isoform 2: Found in a complex composed of MACF1, APC, AXIN1, CTNNB1 and GSK3B. Isoform 2: Interacts with GOLGA4. Isoform 2: Interacts with CAMSAP3. In terms of processing, phosphorylated on serine residues in the C-terminal tail by GSK3B. Phosphorylation inhibits microtubule-binding and this plays a critical role in bulge stem cell migration and skin wound repair. Wnt-signaling can repress phosphorylation. In terms of tissue distribution, isoform 2: Ubiquitously expressed. Isoform 1: Expressed in cell lines NCI-H460, A-549 and HaCaT. Isoform 4: Expressed in heart, lung, pituitary and placenta, not found in brain, kidney, liver, pancreas or skeletal muscle.

The protein localises to the cytoplasm. It localises to the cytoskeleton. The protein resides in the golgi apparatus. It is found in the cell membrane. Its subcellular location is the cell projection. The protein localises to the ruffle membrane. Its function is as follows. F-actin-binding protein which plays a role in cross-linking actin to other cytoskeletal proteins and also binds to microtubules. Plays an important role in ERBB2-dependent stabilization of microtubules at the cell cortex. Acts as a positive regulator of Wnt receptor signaling pathway and is involved in the translocation of AXIN1 and its associated complex (composed of APC, CTNNB1 and GSK3B) from the cytoplasm to the cell membrane. Has actin-regulated ATPase activity and is essential for controlling focal adhesions (FAs) assembly and dynamics. Interaction with CAMSAP3 at the minus ends of non-centrosomal microtubules tethers microtubules minus-ends to actin filaments, regulating focal adhesion size and cell migration. May play role in delivery of transport vesicles containing GPI-linked proteins from the trans-Golgi network through its interaction with GOLGA4. Plays a key role in wound healing and epidermal cell migration. Required for efficient upward migration of bulge cells in response to wounding and this function is primarily rooted in its ability to coordinate microtubule dynamics and polarize hair follicle stem cells. As a regulator of actin and microtubule arrangement and stabilization, it plays an essential role in neurite outgrowth, branching and spine formation during brain development. The protein is Microtubule-actin cross-linking factor 1, isoforms 1/2/3/4/5 of Homo sapiens (Human).